A 431-amino-acid chain; its full sequence is Enolase (431 aa).

Gln-167 lines the (2R)-2-phosphoglycerate pocket. The Proton donor role is filled by Glu-209. Mg(2+)-binding residues include Asp-246, Glu-289, and Asp-316. Lys-341, Arg-370, Ser-371, and Lys-392 together coordinate (2R)-2-phosphoglycerate. Catalysis depends on Lys-341, which acts as the Proton acceptor.

The protein belongs to the enolase family. In terms of assembly, component of the RNA degradosome, a multiprotein complex involved in RNA processing and mRNA degradation. Mg(2+) is required as a cofactor.

Its subcellular location is the cytoplasm. The protein localises to the secreted. It localises to the cell surface. It catalyses the reaction (2R)-2-phosphoglycerate = phosphoenolpyruvate + H2O. The protein operates within carbohydrate degradation; glycolysis; pyruvate from D-glyceraldehyde 3-phosphate: step 4/5. Its function is as follows. Catalyzes the reversible conversion of 2-phosphoglycerate (2-PG) into phosphoenolpyruvate (PEP). It is essential for the degradation of carbohydrates via glycolysis. The protein is Enolase of Shewanella sediminis (strain HAW-EB3).